The following is an 88-amino-acid chain: UPF0297 protein SGO_2042 (88 aa).

The protein belongs to the UPF0297 family.

The polypeptide is UPF0297 protein SGO_2042 (Streptococcus gordonii (strain Challis / ATCC 35105 / BCRC 15272 / CH1 / DL1 / V288)).